The chain runs to 632 residues: 1-deoxy-D-xylulose-5-phosphate synthase (632 aa).

Thiamine diphosphate is bound by residues His74 and 115–117; that span reads AHS. Residue Asp146 participates in Mg(2+) binding. Thiamine diphosphate-binding positions include 147–148, Asn176, Tyr283, and Glu365; that span reads GA. Mg(2+) is bound at residue Asn176.

The protein belongs to the transketolase family. DXPS subfamily. As to quaternary structure, homodimer. Requires Mg(2+) as cofactor. Thiamine diphosphate serves as cofactor.

The enzyme catalyses D-glyceraldehyde 3-phosphate + pyruvate + H(+) = 1-deoxy-D-xylulose 5-phosphate + CO2. It participates in metabolic intermediate biosynthesis; 1-deoxy-D-xylulose 5-phosphate biosynthesis; 1-deoxy-D-xylulose 5-phosphate from D-glyceraldehyde 3-phosphate and pyruvate: step 1/1. Catalyzes the acyloin condensation reaction between C atoms 2 and 3 of pyruvate and glyceraldehyde 3-phosphate to yield 1-deoxy-D-xylulose-5-phosphate (DXP). The polypeptide is 1-deoxy-D-xylulose-5-phosphate synthase (Paraburkholderia phymatum (strain DSM 17167 / CIP 108236 / LMG 21445 / STM815) (Burkholderia phymatum)).